A 234-amino-acid chain; its full sequence is DNA repair protein RecO (234 aa).

It belongs to the RecO family.

Involved in DNA repair and RecF pathway recombination. This Halorhodospira halophila (strain DSM 244 / SL1) (Ectothiorhodospira halophila (strain DSM 244 / SL1)) protein is DNA repair protein RecO.